Consider the following 554-residue polypeptide: MNRRGNSMGKPMTAMLQMQAVHRDESQVVELKKTSYFPYLFNLVMPKMFYHSPNRIVVARLYLDVHTHDKQAAEYFEGFQTPCFEVPASLFPGEVPLDKIVFMPTVMLPMGFEAGGVFGPGVLPPSSYPVDLIASGHKGETPPLFVGLRCLYVHLPLEIESLLDKMGEFPASQNALVYKLHPSDHLLQKENPQELMLRPDFTLSMIYNIPAPPPPPSPYPYRHVPVQYNIYTPDLSKVLMLMPHQRNLTVAILSTVNNPHVPSVALATMGDEECPKFELPSDVFPICEGVNRPIFLPRRFLPKGFESGCVFKPGSLSELWFVNYIGRFATPQPQHTCAITPPLFVGKYCRGEGAISMFKEIQLESKKQNCNVDQSLAEGSLKAVEPKRAHVPLTKGFFVMETEHPTPPEGAHCLQSYQQASDEGCLVKVKKDEDAEITESQEKDKVYPTKVASKSENEKKYLSCFKVDSDIELVADATADMGPAEMSLLVKEKDLPGINGACVLSQLSQVLVDRDQIRSHTDQLIHNHIYRMDRDRMLALRQPIHMCSGCGTLH.

This sequence belongs to the DM7 family.

This is DM7 family protein GG17593 from Drosophila erecta (Fruit fly).